The primary structure comprises 647 residues: MSAALLEISGCYRTFQAGEQQLTVLKDVNLTIERGEMVAIVGASGSGKSTLMNILGCLDKPSKGAYFINGQDTSTMDADELAQLRREHFGFIFQRYHLLSDLTAIGNVEVPAVYAGKERSARKDRAEHLLTRLGLGDRLDHKPNQLSGGQQQRVSVARALMNGGDVILADEPTGALDSHSGEEMMQLLQELHSDGHTIIIVTHDMNVAQYADRIIEIKDGIIISDERKTKAPKHVDTAVTKINNRIRVASWDRYVEAFKMALLAMSTHRLRTFLTMLGIIIGIASVVSVVALGEGSQREILNSISSMGTNTIDIRPGFGFGDRRSGKVKTLIVKDADALKHLPYVDSVTPTVDSSMTLRYGNKAVTTVVNGVGPEFFRVRGYELAMGQFWDEDSVSSLAQDAVIDDKVRKELFPRSSPIGEVIFIGNLPVRIIGVTEPKDSVFGKSDSLNVWLPYTTLSGRIVGKNYLNGITVRLNESVPSNAAEQGIITLLKMRHGIEDFFTINTDAIRQNIEKTTATMTLLISAIAVISLIVGGIGVMNIMLVSVTERTREIGVRMAVGARQSDILRQFLIEAVLVCLCGGTLGIALAYLIGVVFAQTGGSFQMIYSTTSIVAAFACSTLIGVLFGFLPARNAARLDPVDALARE.

The region spanning 6–244 (LEISGCYRTF…VDTAVTKINN (239 aa)) is the ABC transporter domain. 42–49 (GASGSGKS) is an ATP binding site. Helical transmembrane passes span 273 to 293 (FLTM…VALG), 522 to 542 (LLIS…VMNI), 577 to 597 (LVCL…GVVF), and 612 to 632 (SIVA…FLPA).

Belongs to the ABC transporter superfamily. Macrolide exporter (TC 3.A.1.122) family. Homodimer. Part of the tripartite efflux system MacAB-TolC, which is composed of an inner membrane transporter, MacB, a periplasmic membrane fusion protein, MacA, and an outer membrane component, TolC. The complex forms a large protein conduit and can translocate molecules across both the inner and outer membranes. Interacts with MacA.

It is found in the cell inner membrane. Part of the tripartite efflux system MacAB-TolC. MacB is a non-canonical ABC transporter that contains transmembrane domains (TMD), which form a pore in the inner membrane, and an ATP-binding domain (NBD), which is responsible for energy generation. Confers resistance against macrolides. In Shewanella sp. (strain W3-18-1), this protein is Macrolide export ATP-binding/permease protein MacB.